The following is a 361-amino-acid chain: Chorismate synthase (361 aa).

Arg-48 serves as a coordination point for NADP(+). Residues 125–127 (RSS), 238–239 (NA), Gly-278, 293–297 (KPTSS), and Arg-319 each bind FMN.

The protein belongs to the chorismate synthase family. In terms of assembly, homotetramer. The cofactor is FMNH2.

It carries out the reaction 5-O-(1-carboxyvinyl)-3-phosphoshikimate = chorismate + phosphate. The protein operates within metabolic intermediate biosynthesis; chorismate biosynthesis; chorismate from D-erythrose 4-phosphate and phosphoenolpyruvate: step 7/7. Functionally, catalyzes the anti-1,4-elimination of the C-3 phosphate and the C-6 proR hydrogen from 5-enolpyruvylshikimate-3-phosphate (EPSP) to yield chorismate, which is the branch point compound that serves as the starting substrate for the three terminal pathways of aromatic amino acid biosynthesis. This reaction introduces a second double bond into the aromatic ring system. The sequence is that of Chorismate synthase from Vibrio anguillarum (strain ATCC 68554 / 775) (Listonella anguillarum).